The sequence spans 152 residues: Phospholipase A2 (152 aa).

The signal sequence occupies residues 1-20; it reads MAACHRILLLLSVAVASGAA. 8 cysteine pairs are disulfide-bonded: Cys-39–Cys-96, Cys-53–Cys-142, Cys-55–Cys-70, Cys-69–Cys-124, Cys-75–Cys-149, Cys-76–Cys-117, Cys-85–Cys-110, and Cys-103–Cys-115. Gly-56 and Gly-58 together coordinate Ca(2+). His-73 is an active-site residue. Asp-74 contacts Ca(2+). Residue Asp-118 is part of the active site.

The protein belongs to the phospholipase A2 family. Expressed by the venom gland. Heavily expressed in the venom gland transcriptome.

It is found in the secreted. The enzyme catalyses a 1,2-diacyl-sn-glycero-3-phosphocholine + H2O = a 1-acyl-sn-glycero-3-phosphocholine + a fatty acid + H(+). In terms of biological role, PA2 catalyzes the calcium-dependent hydrolysis of the 2-acyl groups in 3-sn-phosphoglycerides. The protein is Phospholipase A2 of Meiacanthus atrodorsalis (Forktail blenny).